We begin with the raw amino-acid sequence, 340 residues long: MRISIVGITGYSGMELLRILLQHPQAEVVSLHASQDMEAPASELYPHLKGICDLKIEAFDSQEIMRRADLVFFATSSGVAKDLSKDFVEAGFPVIDLSGDHRLPGNIYKKWYQKEPAEDYVQKAFIYGLSEFTDVRGERFIANPGCYATATELALIPLLKARAIELDFIIVDAKSGLTGAGKNPAASSHFVHVHDNYVTYKLNQHQHIPEIVQQLQRFDKRLQQIQFSTSLIPLNRGIVATVYSKLKEPLTREELAAIYQDCYQDKPFVRIQAALPNLHQVVGTNYTDIGFDYNPVTNILTVVAVLDNLIKGAAGQAVQNMNLMLGFPETDGLLSQPSYV.

Cysteine 146 is a catalytic residue.

Belongs to the NAGSA dehydrogenase family. Type 1 subfamily.

It is found in the cytoplasm. It catalyses the reaction N-acetyl-L-glutamate 5-semialdehyde + phosphate + NADP(+) = N-acetyl-L-glutamyl 5-phosphate + NADPH + H(+). It participates in amino-acid biosynthesis; L-arginine biosynthesis; N(2)-acetyl-L-ornithine from L-glutamate: step 3/4. In terms of biological role, catalyzes the NADPH-dependent reduction of N-acetyl-5-glutamyl phosphate to yield N-acetyl-L-glutamate 5-semialdehyde. The protein is N-acetyl-gamma-glutamyl-phosphate reductase of Streptococcus sanguinis (strain SK36).